The chain runs to 84 residues: CDC42 small effector protein 2-A (84 aa).

Residues cysteine 10 and cysteine 11 are each lipidated (S-palmitoyl cysteine). A CRIB domain is found at 29–42 (IGEPTNFVHTAHVG).

Belongs to the CDC42SE/SPEC family.

It localises to the cytoplasm. It is found in the cytoskeleton. Its subcellular location is the cell membrane. In terms of biological role, probably involved in the organization of the actin cytoskeleton by acting downstream of CDC42, inducing actin filament assembly. The sequence is that of CDC42 small effector protein 2-A (cdc42se2-A) from Xenopus tropicalis (Western clawed frog).